The primary structure comprises 523 residues: MSTRLHRRVALITLGCSRNEVDSEELAARLGADGWELVSDAADADAVLVNTCGFVDAAKKDSIDALLAADGLRAGGGPSGPADGAGPGPRAVVAVGCLAERYGTELAESLPEADAVLGFDAYPNIATHLAAVLAGTPVPAHSPRDRRTMLPITPVDRAAPALPPAAVSTGAVPLRRRLTAGPVAVLKISSGCDRRCAFCAIPSFRGSHVSRSPDDVLAEAEWLAGQGARELVLVSENSTSYGKDLGDLRALEKLLPQLAAVSGIVRVRTVYLQPAEMRPSLLEVLLTTPGLAPYLDLSFQHASPPVLRRMRRFGGSGHFLDLLARARALAPELGARSNVIVGFPGETPEDVDILAEFLEAAELDAVGVFGYSDEEGTEAAGLTDKIPDELIERRRVRVTDLVEQLTAARADARIGSRVQVLVEEVAGGLATGCAAHQQAEVDGGCVVRLSPGGAADDGPERLGVGDLVGVGDLVEARVVATEGVDLIAEFIAVLDRARPTAAVARPTPDRAAALVGRGVADGT.

Residues 7 to 134 (RRVALITLGC…IATHLAAVLA (128 aa)) enclose the MTTase N-terminal domain. The [4Fe-4S] cluster site is built by cysteine 16, cysteine 52, cysteine 97, cysteine 192, cysteine 196, and cysteine 199. A Radical SAM core domain is found at 178–409 (LTAGPVAVLK…DLVEQLTAAR (232 aa)). Residues 411 to 492 (DARIGSRVQV…GVDLIAEFIA (82 aa)) form the TRAM domain.

This sequence belongs to the methylthiotransferase family. RimO subfamily. [4Fe-4S] cluster serves as cofactor.

It is found in the cytoplasm. It catalyses the reaction L-aspartate(89)-[ribosomal protein uS12]-hydrogen + (sulfur carrier)-SH + AH2 + 2 S-adenosyl-L-methionine = 3-methylsulfanyl-L-aspartate(89)-[ribosomal protein uS12]-hydrogen + (sulfur carrier)-H + 5'-deoxyadenosine + L-methionine + A + S-adenosyl-L-homocysteine + 2 H(+). Catalyzes the methylthiolation of an aspartic acid residue of ribosomal protein uS12. This chain is Ribosomal protein uS12 methylthiotransferase RimO, found in Frankia casuarinae (strain DSM 45818 / CECT 9043 / HFP020203 / CcI3).